Reading from the N-terminus, the 272-residue chain is Methylesterase 8 (272 aa).

Catalysis depends on Ser-102, which acts as the Acyl-ester intermediate. Residues Asp-222 and His-250 each act as charge relay system in the active site.

This sequence belongs to the AB hydrolase superfamily. Methylesterase family.

Functionally, methylesterase shown to have carboxylesterase activity in vitro. The polypeptide is Methylesterase 8 (Arabidopsis thaliana (Mouse-ear cress)).